Reading from the N-terminus, the 55-residue chain is ATP synthase F(0) complex subunit 8 (55 aa).

A helical transmembrane segment spans residues 7–24 (APWFSIMIMTWLTLALLI). Residues 34-55 (TNPPSSKPSLTTKPTPWAWPWT) form a disordered region.

Belongs to the ATPase protein 8 family. As to quaternary structure, component of the ATP synthase complex composed at least of ATP5F1A/subunit alpha, ATP5F1B/subunit beta, ATP5MC1/subunit c (homooctomer), MT-ATP6/subunit a, MT-ATP8/subunit 8, ATP5ME/subunit e, ATP5MF/subunit f, ATP5MG/subunit g, ATP5MK/subunit k, ATP5MJ/subunit j, ATP5F1C/subunit gamma, ATP5F1D/subunit delta, ATP5F1E/subunit epsilon, ATP5PF/subunit F6, ATP5PB/subunit b, ATP5PD/subunit d, ATP5PO/subunit OSCP. ATP synthase complex consists of a soluble F(1) head domain (subunits alpha(3) and beta(3)) - the catalytic core - and a membrane F(0) domain - the membrane proton channel (subunits c, a, 8, e, f, g, k and j). These two domains are linked by a central stalk (subunits gamma, delta, and epsilon) rotating inside the F1 region and a stationary peripheral stalk (subunits F6, b, d, and OSCP).

Its subcellular location is the mitochondrion membrane. In terms of biological role, subunit 8, of the mitochondrial membrane ATP synthase complex (F(1)F(0) ATP synthase or Complex V) that produces ATP from ADP in the presence of a proton gradient across the membrane which is generated by electron transport complexes of the respiratory chain. ATP synthase complex consist of a soluble F(1) head domain - the catalytic core - and a membrane F(1) domain - the membrane proton channel. These two domains are linked by a central stalk rotating inside the F(1) region and a stationary peripheral stalk. During catalysis, ATP synthesis in the catalytic domain of F(1) is coupled via a rotary mechanism of the central stalk subunits to proton translocation. In vivo, can only synthesize ATP although its ATP hydrolase activity can be activated artificially in vitro. Part of the complex F(0) domain. The sequence is that of ATP synthase F(0) complex subunit 8 from Aythya americana (Redhead).